The following is a 468-amino-acid chain: ATP synthase subunit beta (468 aa).

Residue Gly148–Thr155 participates in ATP binding.

Belongs to the ATPase alpha/beta chains family. In terms of assembly, F-type ATPases have 2 components, CF(1) - the catalytic core - and CF(0) - the membrane proton channel. CF(1) has five subunits: alpha(3), beta(3), gamma(1), delta(1), epsilon(1). CF(0) has three main subunits: a(1), b(2) and c(9-12). The alpha and beta chains form an alternating ring which encloses part of the gamma chain. CF(1) is attached to CF(0) by a central stalk formed by the gamma and epsilon chains, while a peripheral stalk is formed by the delta and b chains.

It is found in the cell inner membrane. The enzyme catalyses ATP + H2O + 4 H(+)(in) = ADP + phosphate + 5 H(+)(out). Its function is as follows. Produces ATP from ADP in the presence of a proton gradient across the membrane. The catalytic sites are hosted primarily by the beta subunits. The polypeptide is ATP synthase subunit beta (Xanthomonas euvesicatoria pv. vesicatoria (strain 85-10) (Xanthomonas campestris pv. vesicatoria)).